The primary structure comprises 440 residues: Gap junction alpha-8 protein (440 aa).

The stretch at 2 to 12 is an intramembrane region; it reads GDWSFLGNILE. Topologically, residues 13 to 21 are cytoplasmic; it reads EVNEHSTVI. Residues 22 to 42 form a helical membrane-spanning segment; the sequence is GRVWLTVLFIFRILILGTAAE. Residues 43–71 lie on the Extracellular side of the membrane; that stretch reads FVWGDEQSDFVCNTQQPGCENVCYDEAFP. 3 disulfides stabilise this stretch: Cys54-Cys201, Cys61-Cys195, and Cys65-Cys190. The chain crosses the membrane as a helical span at residues 72-92; the sequence is ISHIRLWVLQIIFVSTPSLMY. Over 93-161 the chain is Cytoplasmic; it reads VGHAVHHVRM…GTLLRTYVCH (69 aa). Positions 111–143 are disordered; that stretch reads AEELCQQSRSNGGERVPIAPDQASIRKSSSSSK. A helical transmembrane segment spans residues 162–182; sequence IIFKTLFEVGFIVGHYFLYGF. The Extracellular portion of the chain corresponds to 183-210; it reads RILPLYRCSRWPCPNVVDCFVSRPTEKT. Residues 211–231 form a helical membrane-spanning segment; sequence IFILFMLSVAFVSLFLNIMEM. Residues 232 to 440 lie on the Cytoplasmic side of the membrane; it reads SHLGMKGIRS…SRARSDDLTI (209 aa). Residues 338–440 form a disordered region; it reads VEREEPPIEE…SRARSDDLTI (103 aa). Composition is skewed to basic and acidic residues over residues 353 to 364 and 374 to 399; these read VGEKKQEAEKVA and PDRE…EKVT. Residues 423 to 432 show a composition bias toward low complexity; the sequence is LSRLSKASSR.

Belongs to the connexin family. Alpha-type (group II) subfamily. In terms of assembly, a hemichannel or connexon is composed of a hexamer of connexins. A functional gap junction is formed by the apposition of two hemichannels. Forms heteromeric channels with GJA3. As to expression, detected in eye lens (at protein level). Eye lens.

The protein localises to the cell membrane. Its subcellular location is the cell junction. The protein resides in the gap junction. Its function is as follows. Structural component of eye lens gap junctions. Gap junctions are dodecameric channels that connect the cytoplasm of adjoining cells. They are formed by the docking of two hexameric hemichannels, one from each cell membrane. Small molecules and ions diffuse from one cell to a neighboring cell via the central pore. The polypeptide is Gap junction alpha-8 protein (Gja8) (Mus musculus (Mouse)).